The sequence spans 364 residues: O-methyltransferase 1 (364 aa).

Residues Ser-183, Gly-207, Asp-230, Asp-250, and Lys-264 each coordinate S-adenosyl-L-homocysteine. Asp-230 is a binding site for S-adenosyl-L-methionine. The active-site Proton acceptor is the His-268.

It belongs to the class I-like SAM-binding methyltransferase superfamily. Cation-independent O-methyltransferase family. As to quaternary structure, homodimer.

The enzyme catalyses dopamine + S-adenosyl-L-methionine = 3-methoxytyramine + S-adenosyl-L-homocysteine + H(+). It catalyses the reaction 3,4-dihydroxy-5-methoxyphenethylamine + S-adenosyl-L-methionine = 4-hydroxy-3,5-dimethoxyphenethylamine + S-adenosyl-L-homocysteine + H(+). The protein operates within aromatic compound metabolism. It functions in the pathway alkaloid biosynthesis. Its function is as follows. O-methyltransferase participating in the biosynthesis of natural products derived from phenylethylamine, including mescaline, a natural hallucinogen potentially used in psychotherapeutic treatments. Catalyzes the O-methylation of mescaline meta hydroxyl groups, using dopamine and 3,4-dihydroxy-5-methoxyphenethylamine as substrates. The chain is O-methyltransferase 1 from Lophophora williamsii (Peyote).